The sequence spans 249 residues: 5-oxoprolinase subunit A (249 aa).

This sequence belongs to the LamB/PxpA family. In terms of assembly, forms a complex composed of PxpA, PxpB and PxpC.

It catalyses the reaction 5-oxo-L-proline + ATP + 2 H2O = L-glutamate + ADP + phosphate + H(+). Catalyzes the cleavage of 5-oxoproline to form L-glutamate coupled to the hydrolysis of ATP to ADP and inorganic phosphate. The polypeptide is 5-oxoprolinase subunit A (Limosilactobacillus fermentum (strain NBRC 3956 / LMG 18251) (Lactobacillus fermentum)).